Consider the following 680-residue polypeptide: DNA-directed RNA polymerase subunit beta' (680 aa).

Cys69, Cys71, Cys87, and Cys90 together coordinate Zn(2+). Mg(2+)-binding residues include Asp489, Asp491, and Asp493.

The protein belongs to the RNA polymerase beta' chain family. RpoC1 subfamily. In plastids the minimal PEP RNA polymerase catalytic core is composed of four subunits: alpha, beta, beta', and beta''. When a (nuclear-encoded) sigma factor is associated with the core the holoenzyme is formed, which can initiate transcription. The cofactor is Mg(2+). Zn(2+) serves as cofactor.

Its subcellular location is the plastid. The protein localises to the chloroplast. The enzyme catalyses RNA(n) + a ribonucleoside 5'-triphosphate = RNA(n+1) + diphosphate. Functionally, DNA-dependent RNA polymerase catalyzes the transcription of DNA into RNA using the four ribonucleoside triphosphates as substrates. The chain is DNA-directed RNA polymerase subunit beta' from Ranunculus macranthus (Large buttercup).